The sequence spans 292 residues: Feruloyl esterase B (292 aa).

Positions 1 to 18 (MLPRTLLGLALTAATGLC) are cleaved as a signal peptide. N88, N117, N179, and N245 each carry an N-linked (GlcNAc...) asparagine glycan.

The protein belongs to the carbohydrate esterase 1 (CE1) family. Feruloyl esterase type B subfamily.

The protein resides in the secreted. It catalyses the reaction feruloyl-polysaccharide + H2O = ferulate + polysaccharide.. Functionally, involved in degradation of plant cell walls. Hydrolyzes of the feruloyl-arabinose ester bond in arabinoxylans as well as the feruloyl-galactose and feruloyl-arabinose ester bonds in pectin. In Neurospora crassa (strain ATCC 24698 / 74-OR23-1A / CBS 708.71 / DSM 1257 / FGSC 987), this protein is Feruloyl esterase B (fae-1).